We begin with the raw amino-acid sequence, 427 residues long: Glutamate-1-semialdehyde 2,1-aminomutase (427 aa).

An N6-(pyridoxal phosphate)lysine modification is found at lysine 265.

Belongs to the class-III pyridoxal-phosphate-dependent aminotransferase family. HemL subfamily. Homodimer. Requires pyridoxal 5'-phosphate as cofactor.

The protein localises to the cytoplasm. It catalyses the reaction (S)-4-amino-5-oxopentanoate = 5-aminolevulinate. It functions in the pathway porphyrin-containing compound metabolism; protoporphyrin-IX biosynthesis; 5-aminolevulinate from L-glutamyl-tRNA(Glu): step 2/2. The protein is Glutamate-1-semialdehyde 2,1-aminomutase of Pseudomonas aeruginosa (strain UCBPP-PA14).